An 87-amino-acid polypeptide reads, in one-letter code: Exodeoxyribonuclease 7 small subunit (87 aa).

It belongs to the XseB family. Heterooligomer composed of large and small subunits.

It is found in the cytoplasm. The enzyme catalyses Exonucleolytic cleavage in either 5'- to 3'- or 3'- to 5'-direction to yield nucleoside 5'-phosphates.. Functionally, bidirectionally degrades single-stranded DNA into large acid-insoluble oligonucleotides, which are then degraded further into small acid-soluble oligonucleotides. The protein is Exodeoxyribonuclease 7 small subunit of Serratia proteamaculans (strain 568).